Consider the following 206-residue polypeptide: Small ribosomal subunit protein uS4 (206 aa).

Positions 96-156 (RRLDNVVYRM…EKSKNQLRIK (61 aa)) constitute an S4 RNA-binding domain.

It belongs to the universal ribosomal protein uS4 family. In terms of assembly, part of the 30S ribosomal subunit. Contacts protein S5. The interaction surface between S4 and S5 is involved in control of translational fidelity.

Its function is as follows. One of the primary rRNA binding proteins, it binds directly to 16S rRNA where it nucleates assembly of the body of the 30S subunit. In terms of biological role, with S5 and S12 plays an important role in translational accuracy. In Hahella chejuensis (strain KCTC 2396), this protein is Small ribosomal subunit protein uS4.